The primary structure comprises 289 residues: ATP synthase gamma chain (289 aa).

It belongs to the ATPase gamma chain family. As to quaternary structure, F-type ATPases have 2 components, CF(1) - the catalytic core - and CF(0) - the membrane proton channel. CF(1) has five subunits: alpha(3), beta(3), gamma(1), delta(1), epsilon(1). CF(0) has three main subunits: a, b and c.

Its subcellular location is the cell inner membrane. Produces ATP from ADP in the presence of a proton gradient across the membrane. The gamma chain is believed to be important in regulating ATPase activity and the flow of protons through the CF(0) complex. The sequence is that of ATP synthase gamma chain from Cereibacter sphaeroides (strain ATCC 17025 / ATH 2.4.3) (Rhodobacter sphaeroides).